A 545-amino-acid chain; its full sequence is CTP synthase (545 aa).

Residues 1–266 (MTTNYIFVTG…DDYICKRFGL (266 aa)) are amidoligase domain. Residue S14 coordinates CTP. Position 14 (S14) interacts with UTP. ATP contacts are provided by residues 15-20 (SLGKGI) and D72. Positions 72 and 140 each coordinate Mg(2+). CTP contacts are provided by residues 147-149 (DIE), 187-192 (KTKPTQ), and K223. Residues 187–192 (KTKPTQ) and K223 contribute to the UTP site. 239–241 (KDV) contacts ATP. A Glutamine amidotransferase type-1 domain is found at 291 to 542 (TIGMVGKYIA…VKAAGEYQKR (252 aa)). Residue G352 coordinates L-glutamine. The active-site Nucleophile; for glutamine hydrolysis is C379. L-glutamine-binding positions include 380 to 383 (LGMQ), E403, and R470. Catalysis depends on residues H515 and E517.

Belongs to the CTP synthase family. As to quaternary structure, homotetramer.

The catalysed reaction is UTP + L-glutamine + ATP + H2O = CTP + L-glutamate + ADP + phosphate + 2 H(+). The enzyme catalyses L-glutamine + H2O = L-glutamate + NH4(+). It catalyses the reaction UTP + NH4(+) + ATP = CTP + ADP + phosphate + 2 H(+). It participates in pyrimidine metabolism; CTP biosynthesis via de novo pathway; CTP from UDP: step 2/2. Its activity is regulated as follows. Allosterically activated by GTP, when glutamine is the substrate; GTP has no effect on the reaction when ammonia is the substrate. The allosteric effector GTP functions by stabilizing the protein conformation that binds the tetrahedral intermediate(s) formed during glutamine hydrolysis. Inhibited by the product CTP, via allosteric rather than competitive inhibition. In terms of biological role, catalyzes the ATP-dependent amination of UTP to CTP with either L-glutamine or ammonia as the source of nitrogen. Regulates intracellular CTP levels through interactions with the four ribonucleotide triphosphates. In Sodalis glossinidius (strain morsitans), this protein is CTP synthase.